Here is a 253-residue protein sequence, read N- to C-terminus: Sulfate transporter CysZ (253 aa).

Transmembrane regions (helical) follow at residues phenylalanine 31–phenylalanine 51, leucine 75–isoleucine 95, isoleucine 151–tryptophan 171, and isoleucine 222–valine 242.

The protein belongs to the CysZ family.

It is found in the cell inner membrane. Its function is as follows. High affinity, high specificity proton-dependent sulfate transporter, which mediates sulfate uptake. Provides the sulfur source for the cysteine synthesis pathway. The chain is Sulfate transporter CysZ from Shigella flexneri serotype 5b (strain 8401).